Reading from the N-terminus, the 800-residue chain is Signaling protein YkoW (800 aa).

7 helical membrane-spanning segments follow: residues 5-27, 44-66, 76-98, 103-125, 135-157, 178-200, and 215-237; these read VTYNTTLICLSILIACTASYISL, WLIGGSLIMGFGIWSMHFVGMMA, EFMPLMAAIGASVSGSFVSLYFV, LTYYRLLTGSVVLGASIASMHYI, IIYEPILFTVSIIIAIAASFVSL, VSSIVMGIGISGMHYTGMLAATF, and TFHWSIFVTLIIFCIQTLLLFSS. One can recognise an MHYT domain in the interval 7–201; it reads YNTTLICLSI…YTGMLAATFH (195 aa). Positions 255 to 319 constitute a PAS domain; that stretch reads QRFQSLIVHN…FEQVKKDKQA (65 aa). One can recognise a GGDEF domain in the interval 402-536; that stretch reads YNTVVFFLDL…NKSKYRYYSF (135 aa). In terms of domain architecture, EAL spans 545-798; the sequence is KLNQEMVLRE…QFEQFIIEQP (254 aa).

The protein localises to the cell membrane. In terms of biological role, probable signaling protein whose physiological role is not yet known. The protein is Signaling protein YkoW (ykoW) of Bacillus subtilis (strain 168).